The following is a 300-amino-acid chain: Endonuclease III-like protein 1 (300 aa).

Residues 1–19 (MNSGVRMVTRSRSRATRIA) constitute a mitochondrion transit peptide. The tract at residues 1–53 (MNSGVRMVTRSRSRATRIASEGCREELAPREAAAEGRKSHRPVRHPRRTQKTH) is disordered. Residues 22–37 (GCREELAPREAAAEGR) show a composition bias toward basic and acidic residues. Basic residues predominate over residues 38-51 (KSHRPVRHPRRTQK). In terms of domain architecture, HhH spans 187-211 (RYEGDIPASVAELVALPGVGPKMAH). Lys-208 acts as the Nucleophile; for N-glycosylase activity in catalysis. [4Fe-4S] cluster contacts are provided by Cys-278, Cys-285, Cys-288, and Cys-294.

It belongs to the Nth/MutY family. Interacts with YBX1. Interacts with ERCC5/XPG; the interaction stimulates NTHL1 activity and NTHL1 binding to its DNA substrate. It depends on [4Fe-4S] cluster as a cofactor. In terms of processing, ubiquitinated by TRIM26; leading to proteasomal degradation. In terms of tissue distribution, widely expressed.

It is found in the nucleus. It localises to the mitochondrion. The catalysed reaction is 2'-deoxyribonucleotide-(2'-deoxyribose 5'-phosphate)-2'-deoxyribonucleotide-DNA = a 3'-end 2'-deoxyribonucleotide-(2,3-dehydro-2,3-deoxyribose 5'-phosphate)-DNA + a 5'-end 5'-phospho-2'-deoxyribonucleoside-DNA + H(+). Bifunctional DNA N-glycosylase with associated apurinic/apyrimidinic (AP) lyase function that catalyzes the first step in base excision repair (BER), the primary repair pathway for the repair of oxidative DNA damage. The DNA N-glycosylase activity releases the damaged DNA base from DNA by cleaving the N-glycosidic bond, leaving an AP site. The AP lyase activity cleaves the phosphodiester bond 3' to the AP site by a beta-elimination. Primarily recognizes and repairs oxidative base damage of pyrimidines. This is Endonuclease III-like protein 1 (Nthl1) from Mus musculus (Mouse).